The chain runs to 477 residues: Beta-agarase D (477 aa).

The N-terminal stretch at Met1–Gly20 is a signal peptide. The GH16 domain occupies Tyr22–Ala378. Substrate is bound by residues Met94–Asn104, Asn123–Thr125, Glu174, Glu179, Arg206, and Glu340. The active-site Nucleophile is Glu174. The active-site Proton donor is Glu179. The span at Asn382–Glu391 shows a compositional bias: low complexity. The disordered stretch occupies residues Asn382–Pro402.

It belongs to the glycosyl hydrolase 16 family.

It localises to the secreted. It catalyses the reaction Hydrolysis of (1-&gt;4)-beta-D-galactosidic linkages in agarose, giving the tetramer as the predominant product.. Cleaves the beta-1,4-linkages between beta-D-galactose and alpha-L-3,6-anhydro-galactose residues in agarose. Cleaves agarose in a random manner with retention of the anomeric-bond configuration, producing beta-anomers that give rise progressively to alpha-anomers when mutarotation takes place. Requires at least 4 consecutive agarose units and is highly intolerant to modifications. The chain is Beta-agarase D (agaD) from Zobellia galactanivorans (strain DSM 12802 / CCUG 47099 / CIP 106680 / NCIMB 13871 / Dsij).